Reading from the N-terminus, the 174-residue chain is Glutaredoxin-C5, chloroplastic (174 aa).

Residues 1–51 (MAVTAFNTLKLVSSSLDPIPSVSCSSYSFSLIYVGSPYKRCLKQSCSVRAM) constitute a chloroplast transit peptide. Thr52 is modified (N-acetylthreonine). Position 90 is an S-glutathionyl cysteine; partial (Cys90). Cys90 and Cys93 are disulfide-bonded. The Glutaredoxin domain maps to 93 to 171 (CTEVKTLFKR…LMLAEANGKN (79 aa)). The glutathione site is built by Val135, Cys148, and Thr149. Position 148 is an S-glutathionyl cysteine; partial (Cys148).

The protein belongs to the glutaredoxin family. CPYC subfamily. Monomeric apoprotein and homodimeric holoprotein containing a [2Fe-2S] cluster. No in vitro interactions with SUFE1, BOLA1, BOLA2 or BOLA4. In terms of processing, glutathionylated.

It localises to the plastid. The protein resides in the chloroplast. Its function is as follows. Has a glutathione-disulfide oxidoreductase activity in the presence of NADPH and glutathione reductase. Reduces low molecular weight disulfides and proteins. Can assemble a [2Fe-2S] cluster, but cannot transfer it to an apoferredoxin. The chain is Glutaredoxin-C5, chloroplastic from Arabidopsis thaliana (Mouse-ear cress).